Here is a 298-residue protein sequence, read N- to C-terminus: Tyrosine recombinase XerC (298 aa).

Residues 1 to 84 enclose the Core-binding (CB) domain; sequence MNHIQDAFLN…TLRTFYEYWM (84 aa). The 182-residue stretch at 105–286 folds into the Tyr recombinase domain; that stretch reads YLPQFFYEEE…SNQQLRKVYL (182 aa). Residues arginine 145, lysine 169, histidine 238, arginine 241, and histidine 264 contribute to the active site. Catalysis depends on tyrosine 273, which acts as the O-(3'-phospho-DNA)-tyrosine intermediate.

The protein belongs to the 'phage' integrase family. XerC subfamily. As to quaternary structure, forms a cyclic heterotetrameric complex composed of two molecules of XerC and two molecules of XerD.

It is found in the cytoplasm. Functionally, site-specific tyrosine recombinase, which acts by catalyzing the cutting and rejoining of the recombining DNA molecules. The XerC-XerD complex is essential to convert dimers of the bacterial chromosome into monomers to permit their segregation at cell division. It also contributes to the segregational stability of plasmids. The chain is Tyrosine recombinase XerC from Staphylococcus aureus (strain USA300).